The sequence spans 85 residues: Probable dolichol-phosphate mannosyltransferase subunit 3 (85 aa).

2 helical membrane passes run 13–33 (VLLV…LSYI) and 37–57 (AHCL…VATF).

It belongs to the DPM3 family.

Its subcellular location is the endoplasmic reticulum membrane. Its pathway is protein modification; protein glycosylation. Stabilizer subunit of the dolichol-phosphate-mannose synthase complex. The sequence is that of Probable dolichol-phosphate mannosyltransferase subunit 3 from Caenorhabditis briggsae.